Here is a 167-residue protein sequence, read N- to C-terminus: Methyl-coenzyme M reductase II operon protein D (167 aa).

MCR is composed of three subunits: alpha, beta, and gamma. The function of protein D is not known.

The protein is Methyl-coenzyme M reductase II operon protein D (mrtD) of Methanocaldococcus jannaschii (strain ATCC 43067 / DSM 2661 / JAL-1 / JCM 10045 / NBRC 100440) (Methanococcus jannaschii).